The chain runs to 151 residues: Ribosome maturation factor RimP (151 aa).

It belongs to the RimP family.

It is found in the cytoplasm. Its function is as follows. Required for maturation of 30S ribosomal subunits. The polypeptide is Ribosome maturation factor RimP (Shewanella halifaxensis (strain HAW-EB4)).